A 500-amino-acid chain; its full sequence is Protein psiE (500 aa).

Positions 1 to 18 (MKLISVLITFLLATVIYS) are cleaved as a signal peptide. An N-linked (GlcNAc...) asparagine glycan is attached at Asn59. One can recognise a PA14 domain in the interval 114-256 (TYDTTRKIYV…KDYCGVCQGD (143 aa)). Asn314, Asn341, Asn366, Asn420, and Asn469 each carry an N-linked (GlcNAc...) asparagine glycan.

The protein belongs to the prespore-cell-inducing factor family.

The protein localises to the secreted. In Dictyostelium discoideum (Social amoeba), this protein is Protein psiE (psiE).